Consider the following 197-residue polypeptide: MENLKATELRLGLPGTEEEAAPPPSTPRAGSKRALAGEPDQAKIKPAAAAKAQVVGWPPVRSYRKSCLQPTTTTTKSKPPPAAAAAETQQKEDVAGAGGLFVKVSMDGAPYLRKIDLKVYKGYRELREALEAMFLCFSGGAAADAAVNPSDFAVTYEDKDGDLMLVGDVPFEMFISTCKRLRIMKGSEARGLGATRG.

2 disordered regions span residues M1–K43 and S66–Q90. An EAR-like (transcriptional repression) motif is present at residues L9 to L13. One can recognise a PB1 domain in the interval G99–G186.

This sequence belongs to the Aux/IAA family. Homodimers and heterodimers. In terms of tissue distribution, highly expressed in etiolated seedlings. Expressed in roots.

Its subcellular location is the nucleus. In terms of biological role, aux/IAA proteins are short-lived transcriptional factors that function as repressors of early auxin response genes at low auxin concentrations. In Oryza sativa subsp. japonica (Rice), this protein is Auxin-responsive protein IAA31 (IAA31).